Reading from the N-terminus, the 94-residue chain is Co-chaperonin GroES (94 aa).

It belongs to the GroES chaperonin family. In terms of assembly, heptamer of 7 subunits arranged in a ring. Interacts with the chaperonin GroEL.

The protein localises to the cytoplasm. In terms of biological role, together with the chaperonin GroEL, plays an essential role in assisting protein folding. The GroEL-GroES system forms a nano-cage that allows encapsulation of the non-native substrate proteins and provides a physical environment optimized to promote and accelerate protein folding. GroES binds to the apical surface of the GroEL ring, thereby capping the opening of the GroEL channel. This is Co-chaperonin GroES from Bacillus subtilis (strain 168).